The following is a 633-amino-acid chain: Uracil permease (633 aa).

The next 12 membrane-spanning stretches (helical) occupy residues 143-163 (WWQCWITIWIGYGFVGAFVVL), 173-193 (LSFPISSRASFGIFFSLWPVI), 197-217 (VMAIVWYSVQAYIAATPVSLM), 242-262 (YEFMCFFIFWAASLPFLLVPP), 268-288 (LFTVKAVLVPFASFGFLIWAI), 310-330 (FSWAFLRSLMGCMANFSTMVI), 350-370 (LVCIPFLFSITCLIGILVTAA), 400-420 (AGVFLISFVFAVAQLGTNISA), 442-462 (GSLFCAAMALCICPWNLMATS), 465-485 (FTMALSAYAIFLSSIAGVVCS), 521-541 (ALAAYLCGVAPCLPGFIAEVG), and 559-579 (YWVGYGLSFSSYTALCYFFPV).

This sequence belongs to the purine-cytosine permease (2.A.39) family. Post-translationally, glycosylated (possible); but there is not yet direct biochemical evidence for it.

The protein localises to the membrane. Its function is as follows. Transport of uracil. This is Uracil permease (FUR4) from Saccharomyces cerevisiae (strain ATCC 204508 / S288c) (Baker's yeast).